The primary structure comprises 500 residues: MAFLLITRRLACSSQKNLHLFIPGSRYISQAAAKVDIEFDYDGPLMKTEVPGPRSKELMKQLNTIQNAEAVHFFCNYEESRGNYLVDVDGNRMLDLYSQISSVPIGYNHPALAKLVQQPQNASTFINRPALGILPPENFVDKLQESLMSVAPRGMSQLITMACGSCSNENAFKTIFMWYRSKERGQRGFSKEELETCMVNQSPGCPDYSILSFMGAFHGRTMGCLATTHSKAIHKIDIPSFDWPIAPFPRLKYPLEEFTTDNQQEEARCLEEVEDLIVKYRKKKRTVAGIIVEPIQSEGGDNHASDDFFRKLRDIARKHGCAFLVDEVQTGGGCTGKFWAHEHWGLDDPADVMTFSKKMMTGGFFHKEEFRPSAPYRIFNTWLGDPSKNLLLAEVINIIKREDLLNNVARVGKTLLTGLLDLQAQYPQFISRVRGRGTFCSFDTPDEAIRNKLILIARNKGVVLGGCGDKSIRFRPTLVFRDHHAHLFLSIFSGILADFK.

The transit peptide at 1 to 28 directs the protein to the mitochondrion; sequence MAFLLITRRLACSSQKNLHLFIPGSRYI. Cysteine 163 is a binding site for [2Fe-2S] cluster. Pyridoxal 5'-phosphate is bound at residue 164 to 165; sequence GS. Cysteine 166 provides a ligand contact to [2Fe-2S] cluster. Residue arginine 220 participates in substrate binding. Position 231 is an N6-succinyllysine (lysine 231). Lysine 252 carries the N6-acetyllysine; alternate modification. Lysine 252 carries the post-translational modification N6-succinyllysine; alternate. 2 positions are modified to N6-acetyllysine: lysine 279 and lysine 318. Lysine 357 is subject to N6-(pyridoxal phosphate)lysine. Pyridoxal 5'-phosphate is bound at residue threonine 381. Lysine 413 is subject to N6-acetyllysine; alternate. Lysine 413 is modified (N6-succinyllysine; alternate). An N6-acetyllysine mark is found at lysine 452 and lysine 470.

Belongs to the class-III pyridoxal-phosphate-dependent aminotransferase family. As to quaternary structure, homodimer; disulfide-linked. The cofactor is pyridoxal 5'-phosphate. Requires [2Fe-2S] cluster as cofactor.

It localises to the mitochondrion matrix. The enzyme catalyses 4-aminobutanoate + 2-oxoglutarate = succinate semialdehyde + L-glutamate. The catalysed reaction is (S)-3-amino-2-methylpropanoate + 2-oxoglutarate = 2-methyl-3-oxopropanoate + L-glutamate. In terms of biological role, catalyzes the conversion of gamma-aminobutyrate and L-beta-aminoisobutyrate to succinate semialdehyde and methylmalonate semialdehyde, respectively. Can also convert delta-aminovalerate and beta-alanine. The chain is 4-aminobutyrate aminotransferase, mitochondrial from Mus musculus (Mouse).